The chain runs to 562 residues: Alpha-amylase 2 (562 aa).

Residue Asn236 coordinates Ca(2+). Catalysis depends on Asp309, which acts as the Nucleophile. Glu338 functions as the Proton donor in the catalytic mechanism.

The protein belongs to the glycosyl hydrolase 13 family. As to quaternary structure, monomer. The cofactor is Ca(2+).

It localises to the cytoplasm. The enzyme catalyses Endohydrolysis of (1-&gt;4)-alpha-D-glucosidic linkages in polysaccharides containing three or more (1-&gt;4)-alpha-linked D-glucose units.. This is Alpha-amylase 2 (amyB) from Dictyoglomus thermophilum (strain ATCC 35947 / DSM 3960 / H-6-12).